A 269-amino-acid chain; its full sequence is Hydroxyethylthiazole kinase (269 aa).

M45 contributes to the substrate binding site. ATP is bound by residues R121 and T167. Residue G194 coordinates substrate.

It belongs to the Thz kinase family. Mg(2+) is required as a cofactor.

It catalyses the reaction 5-(2-hydroxyethyl)-4-methylthiazole + ATP = 4-methyl-5-(2-phosphooxyethyl)-thiazole + ADP + H(+). Its pathway is cofactor biosynthesis; thiamine diphosphate biosynthesis; 4-methyl-5-(2-phosphoethyl)-thiazole from 5-(2-hydroxyethyl)-4-methylthiazole: step 1/1. Functionally, catalyzes the phosphorylation of the hydroxyl group of 4-methyl-5-beta-hydroxyethylthiazole (THZ). This is Hydroxyethylthiazole kinase from Bacillus mycoides (strain KBAB4) (Bacillus weihenstephanensis).